The primary structure comprises 360 residues: Josephin-like protein (360 aa).

The region spanning 5-192 is the Josephin domain; sequence ESKIYHERQR…NQLPLASNYR (188 aa). C18 acts as the Nucleophile in catalysis. Catalysis depends on H129, which acts as the Proton acceptor.

It catalyses the reaction Thiol-dependent hydrolysis of ester, thioester, amide, peptide and isopeptide bonds formed by the C-terminal Gly of ubiquitin (a 76-residue protein attached to proteins as an intracellular targeting signal).. In terms of biological role, may act as a deubiquitinating enzyme. The chain is Josephin-like protein from Arabidopsis thaliana (Mouse-ear cress).